The chain runs to 313 residues: Formimidoylglutamase (313 aa).

6 residues coordinate Mn(2+): His130, Asp155, His157, Asp159, Asp241, and Asp243.

The protein belongs to the arginase family. It depends on Mn(2+) as a cofactor.

The enzyme catalyses N-formimidoyl-L-glutamate + H2O = formamide + L-glutamate. It participates in amino-acid degradation; L-histidine degradation into L-glutamate; L-glutamate from N-formimidoyl-L-glutamate (hydrolase route): step 1/1. Catalyzes the conversion of N-formimidoyl-L-glutamate to L-glutamate and formamide. The sequence is that of Formimidoylglutamase from Salmonella schwarzengrund (strain CVM19633).